Here is a 410-residue protein sequence, read N- to C-terminus: F-box protein At5g36730 (410 aa).

An F-box domain is found at 1 to 46 (MAMSNLPRDLLEEVLSRVPVKSIAAVRSTCKNWNSLTYGQSFTKKL).

The protein is F-box protein At5g36730 of Arabidopsis thaliana (Mouse-ear cress).